Here is a 724-residue protein sequence, read N- to C-terminus: DNA ligase (724 aa).

NAD(+) contacts are provided by residues 44–48, 93–94, and Glu127; these read DADYD and SL. Lys129 serves as the catalytic N6-AMP-lysine intermediate. NAD(+) is bound by residues Arg150, Glu186, Lys307, and Lys331. The Zn(2+) site is built by Cys437, Cys440, Cys461, and Cys467. In terms of domain architecture, BRCT spans 646–724; it reads TEGSPVAGKT…EDEWLALIGG (79 aa).

It belongs to the NAD-dependent DNA ligase family. LigA subfamily. The cofactor is Mg(2+). Mn(2+) serves as cofactor.

The enzyme catalyses NAD(+) + (deoxyribonucleotide)n-3'-hydroxyl + 5'-phospho-(deoxyribonucleotide)m = (deoxyribonucleotide)n+m + AMP + beta-nicotinamide D-nucleotide.. Its function is as follows. DNA ligase that catalyzes the formation of phosphodiester linkages between 5'-phosphoryl and 3'-hydroxyl groups in double-stranded DNA using NAD as a coenzyme and as the energy source for the reaction. It is essential for DNA replication and repair of damaged DNA. The protein is DNA ligase of Agrobacterium fabrum (strain C58 / ATCC 33970) (Agrobacterium tumefaciens (strain C58)).